The following is a 228-amino-acid chain: Uracil-DNA glycosylase (228 aa).

The active-site Proton acceptor is Asp-65.

Belongs to the uracil-DNA glycosylase (UDG) superfamily. UNG family.

It localises to the cytoplasm. It carries out the reaction Hydrolyzes single-stranded DNA or mismatched double-stranded DNA and polynucleotides, releasing free uracil.. Its function is as follows. Excises uracil residues from the DNA which can arise as a result of misincorporation of dUMP residues by DNA polymerase or due to deamination of cytosine. The sequence is that of Uracil-DNA glycosylase from Lacticaseibacillus paracasei (strain ATCC 334 / BCRC 17002 / CCUG 31169 / CIP 107868 / KCTC 3260 / NRRL B-441) (Lactobacillus paracasei).